A 220-amino-acid polypeptide reads, in one-letter code: Large ribosomal subunit protein bL9 (220 aa).

Residues 167 to 184 (AAAEVEQAEDVAAAEQQD) are compositionally biased toward low complexity. The disordered stretch occupies residues 167–220 (AAAEVEQAEDVAAAEQQDSSPVDDHADDADGATGGEGRDEGAGDASDGEEMPST).

This sequence belongs to the bacterial ribosomal protein bL9 family.

Its function is as follows. Binds to the 23S rRNA. The protein is Large ribosomal subunit protein bL9 of Anaplasma marginale (strain St. Maries).